The sequence spans 140 residues: Phosphoribosyl-AMP cyclohydrolase (140 aa).

Residue Asp-78 coordinates Mg(2+). Zn(2+) is bound at residue Cys-79. 2 residues coordinate Mg(2+): Asp-80 and Asp-82. Zn(2+)-binding residues include Cys-96 and Cys-103.

Belongs to the PRA-CH family. Homodimer. The cofactor is Mg(2+). Requires Zn(2+) as cofactor.

It localises to the cytoplasm. The enzyme catalyses 1-(5-phospho-beta-D-ribosyl)-5'-AMP + H2O = 1-(5-phospho-beta-D-ribosyl)-5-[(5-phospho-beta-D-ribosylamino)methylideneamino]imidazole-4-carboxamide. The protein operates within amino-acid biosynthesis; L-histidine biosynthesis; L-histidine from 5-phospho-alpha-D-ribose 1-diphosphate: step 3/9. In terms of biological role, catalyzes the hydrolysis of the adenine ring of phosphoribosyl-AMP. The protein is Phosphoribosyl-AMP cyclohydrolase of Ralstonia pickettii (strain 12J).